The primary structure comprises 347 residues: Nicotinate-nucleotide--dimethylbenzimidazole phosphoribosyltransferase (347 aa).

Glutamate 316 functions as the Proton acceptor in the catalytic mechanism.

Belongs to the CobT family.

The enzyme catalyses 5,6-dimethylbenzimidazole + nicotinate beta-D-ribonucleotide = alpha-ribazole 5'-phosphate + nicotinate + H(+). Its pathway is nucleoside biosynthesis; alpha-ribazole biosynthesis; alpha-ribazole from 5,6-dimethylbenzimidazole: step 1/2. Its function is as follows. Catalyzes the synthesis of alpha-ribazole-5'-phosphate from nicotinate mononucleotide (NAMN) and 5,6-dimethylbenzimidazole (DMB). This Vibrio campbellii (strain ATCC BAA-1116) protein is Nicotinate-nucleotide--dimethylbenzimidazole phosphoribosyltransferase.